A 372-amino-acid polypeptide reads, in one-letter code: Homoserine dehydrogenase (372 aa).

NAD(+) is bound by residues valine 13, glycine 15, valine 16, and threonine 99. The NADP(+) site is built by valine 16 and threonine 99. Valine 16, threonine 99, serine 100, and lysine 123 together coordinate NADPH. Lysine 123 is a binding site for NADP(+). The Na(+) site is built by glutamate 150, valine 153, alanine 155, and leucine 157. NADP(+)-binding residues include glycine 216 and glutamate 219. Glutamate 219 and aspartate 230 together coordinate L-homoserine. The active-site Proton donor is the lysine 234. Glycine 352 is an NAD(+) binding site. Residue glycine 352 participates in NADP(+) binding. NADPH is bound at residue glycine 352.

It belongs to the homoserine dehydrogenase family. Homodimer. It depends on a metal cation as a cofactor.

It carries out the reaction L-homoserine + NADP(+) = L-aspartate 4-semialdehyde + NADPH + H(+). The catalysed reaction is L-homoserine + NAD(+) = L-aspartate 4-semialdehyde + NADH + H(+). It functions in the pathway amino-acid biosynthesis; L-methionine biosynthesis via de novo pathway; L-homoserine from L-aspartate: step 3/3. The protein operates within amino-acid biosynthesis; L-threonine biosynthesis; L-threonine from L-aspartate: step 3/5. Its function is as follows. Catalyzes the conversion of L-aspartate-beta-semialdehyde (L-Asa) to L-homoserine (L-Hse), the third step in the biosynthesis of amino acids that derive from aspartate (the aspartate family of amino acids), including methioinine and threonine, the latter of which is a precursor to isoleucine; production of homoserine leads to a branch-point in the pathway as it can either be O-phosphorylated for processing to threonine, or O-acylated for processing to methionine. This chain is Homoserine dehydrogenase, found in Paracoccidioides brasiliensis (strain Pb18).